A 318-amino-acid chain; its full sequence is NADH-ubiquinone oxidoreductase chain 1 (318 aa).

The next 8 membrane-spanning stretches (helical) occupy residues 2 to 22 (FLIN…FLTL), 69 to 89 (FLFT…WAPL), 102 to 122 (LLFI…SGWA), 146 to 166 (MTTI…TAFA), 171 to 191 (HLWL…STLA), 222 to 242 (LFFM…VILF), 253 to 273 (EIST…FLWV), and 294 to 314 (LPLT…LACI).

It belongs to the complex I subunit 1 family.

The protein localises to the mitochondrion inner membrane. The enzyme catalyses a ubiquinone + NADH + 5 H(+)(in) = a ubiquinol + NAD(+) + 4 H(+)(out). Functionally, core subunit of the mitochondrial membrane respiratory chain NADH dehydrogenase (Complex I) that is believed to belong to the minimal assembly required for catalysis. Complex I functions in the transfer of electrons from NADH to the respiratory chain. The immediate electron acceptor for the enzyme is believed to be ubiquinone. The sequence is that of NADH-ubiquinone oxidoreductase chain 1 (MT-ND1) from Mammuthus primigenius (Siberian woolly mammoth).